Consider the following 379-residue polypeptide: Acetylajmalan esterase 1 (379 aa).

Positions 1-20 (MGFAPLLVFSLFVFAGTTKG) are cleaved as a signal peptide. Catalysis depends on Ser34, which acts as the Nucleophile. 4 N-linked (GlcNAc...) asparagine glycosylation sites follow: Asn96, Asn178, Asn197, and Asn291. Catalysis depends on residues Asp332 and His335.

Belongs to the 'GDSL' lipolytic enzyme family. In terms of tissue distribution, expressed in roots and leaves at low levels.

It carries out the reaction 17-O-acetylnorajmaline + H2O = norajmaline + acetate + H(+). The enzyme catalyses 17-O-acetylajmaline + H2O = ajmaline + acetate + H(+). It functions in the pathway alkaloid biosynthesis; ajmaline biosynthesis. In terms of biological role, acetylesterase involved in the biosynthesis of ajmaline-type monoterpenoid indole alkaloids (MIAs) natural products, important plant-derived pharmaceuticals used in the therapy of heart disorders. Deacetylates 17-O-acetylnorajmaline to produce norajmaline. May also catalyze the conversion of 17-O-acetylajmaline to ajmaline. This is Acetylajmalan esterase 1 from Rauvolfia serpentina (Serpentine wood).